Reading from the N-terminus, the 300-residue chain is uncharacterized protein (300 aa).

Transmembrane regions (helical) follow at residues 4–24 (IIII…WIAM), 31–51 (IPPF…LIIL), 68–88 (FQIF…LYGG), 95–115 (ISSI…HFYL), 120–140 (NFIQ…VLLI), 146–166 (CFFQ…HAVI), 177–197 (VSVI…LSII), 214–234 (ILAV…SYFY), 242–262 (FYAS…EIYI), and 272–292 (LWFI…INFF). EamA domains follow at residues 15-139 (ITWG…FVLL) and 161-287 (LSHA…LTLI).

This sequence belongs to the EamA transporter family.

Its subcellular location is the cell membrane. This is an uncharacterized protein from Buchnera aphidicola subsp. Schizaphis graminum (strain Sg).